Reading from the N-terminus, the 291-residue chain is 4-hydroxy-tetrahydrodipicolinate synthase (291 aa).

T44 serves as a coordination point for pyruvate. The active-site Proton donor/acceptor is Y132. K160 (schiff-base intermediate with substrate) is an active-site residue. I202 serves as a coordination point for pyruvate.

It belongs to the DapA family. Homotetramer; dimer of dimers.

Its subcellular location is the cytoplasm. The enzyme catalyses L-aspartate 4-semialdehyde + pyruvate = (2S,4S)-4-hydroxy-2,3,4,5-tetrahydrodipicolinate + H2O + H(+). It functions in the pathway amino-acid biosynthesis; L-lysine biosynthesis via DAP pathway; (S)-tetrahydrodipicolinate from L-aspartate: step 3/4. Functionally, catalyzes the condensation of (S)-aspartate-beta-semialdehyde [(S)-ASA] and pyruvate to 4-hydroxy-tetrahydrodipicolinate (HTPA). In Parvibaculum lavamentivorans (strain DS-1 / DSM 13023 / NCIMB 13966), this protein is 4-hydroxy-tetrahydrodipicolinate synthase.